Here is an 87-residue protein sequence, read N- to C-terminus: Large ribosomal subunit protein bL31B (87 aa).

This sequence belongs to the bacterial ribosomal protein bL31 family. Type B subfamily. Part of the 50S ribosomal subunit.

The protein is Large ribosomal subunit protein bL31B of Halorhodospira halophila (strain DSM 244 / SL1) (Ectothiorhodospira halophila (strain DSM 244 / SL1)).